A 1069-amino-acid chain; its full sequence is Adenylate-forming reductase (1069 aa).

Residues 20-391 (HPEDPKAVKS…WKLRQDINYR (372 aa)) are adenylation (A) domain. AMP-binding positions include H262, 357 to 358 (AH), T362, and 437 to 440 (AVGR). The 81-residue stretch at 576 to 656 (DSLEEDLKDL…KLGASLRHLA (81 aa)) folds into the Carrier domain. S612 carries the post-translational modification O-(pantetheine 4'-phosphoryl)serine. The reductase (R) domain stretch occupies residues 686–1032 (TVLLTGSTGN…TGKVILDTSR (347 aa)). NADP(+)-binding positions include 693–696 (TGNL), R719, 785–787 (NAW), Y863, and K867.

This sequence belongs to the adenylate-forming reductase family.

The catalysed reaction is 5-methylorsellinate + ATP + NADPH + H(+) = 2,4-dihydroxy 5,6-dimethylbenzaldehyde + AMP + diphosphate + NADP(+). It functions in the pathway secondary metabolite biosynthesis. Its function is as follows. Non-canonical non-ribosomal peptide synthetase; part of the cluster A that mediates the biosynthesis of azasperpyranones, members of the azaphilone family that exhibit anti-cancer activities. Azasperpyranones are synthesized by 2 clusters, A and B. Cluster A is responsible for the production of the polyhydric phenol moiety while the azaphilonoid scaffold is produced by the cluster B. The non-reducing polyketide synthase ATEG_03629 produces 5-methyl orsellinic acid, which is then reduced to 5-methyl orsellinic aldehyde by the NRPS-like protein ATEG_03630. 5-methyl orsellinic aldehyde is then first hydroxylated by the FAD-dependent monooxygenase ATEG_03635 and subsequently hydroxylated by the cytochrome P450 monooxygenase ATEG_03631 to produce the unstable polyhydric phenol precursor of azasperpyranones. On the other hand, the polyketide synthase ATEG_07659 is responsible for producing the 3,5-dimethyloctadienone moiety from acetyl-CoA, three malonyl-CoA, and two S-adenosyl methionines (SAM). The 3,5-dimethyloctadienone moiety is then loaded onto the SAT domain of ATEG_07661 and extended with four malonyl-CoA and one SAM, which leads to the formation of 2,4-dihydroxy-6-(5,7-dimethyl-2-oxo-trans-3-trans-5-nonadienyl)-3-methylbenzaldehyde (compound 8) after reductive release and aldol condensation. The FAD-dependent monooxygenase ATEG_07662 is the next enzyme in the biosynthesis sequence and hydroxylates the side chain at the benzylic position of compound 8. In Aspergillus nidulans, afoF, the ortholog of the FAD-dependent oxygenase ATEG_07660, is the key enzyme for the biosynthesis of asperfuranone by catalyzing the hydroxylation at C-8 of to prevent the formation of a six-membered ring hemiacetal intermediate and thus facilitating the formation of a five-membered ring to produce asperfuranone. In Aspergillus terreus, ATEG_07660 is probably not functional, which leads to the formation of the six-membered ring hemiacetal intermediate presperpyranone instead of asperfuranone. Finally, ATEG_03636 is involved in the condensation of the polyhydric phenol moiety produced by cluster A and the perasperpyranone precursor produced by cluster B, to yield azasperpyranone A. Further modifications of azasperpyranone A result in the production of derivatives, including azasperpyranone B to F. The chain is Adenylate-forming reductase from Aspergillus terreus (strain NIH 2624 / FGSC A1156).